The primary structure comprises 127 residues: Small ribosomal subunit protein bS6 (127 aa).

Residues 101 to 127 form a disordered region; it reads PMMKEEKARDLLQGAKADAPAEQPAAA. A compositionally biased stretch (low complexity) spans 115-127; sequence AKADAPAEQPAAA.

It belongs to the bacterial ribosomal protein bS6 family.

Functionally, binds together with bS18 to 16S ribosomal RNA. The chain is Small ribosomal subunit protein bS6 from Thiobacillus denitrificans (strain ATCC 25259 / T1).